The chain runs to 613 residues: Dihydroxy-acid dehydratase (613 aa).

Asp81 provides a ligand contact to Mg(2+). Residue Cys122 participates in [2Fe-2S] cluster binding. Residues Asp123 and Lys124 each contribute to the Mg(2+) site. Lys124 bears the N6-carboxylysine mark. Cys195 provides a ligand contact to [2Fe-2S] cluster. Glu491 serves as a coordination point for Mg(2+). The active-site Proton acceptor is Ser517.

It belongs to the IlvD/Edd family. Homodimer. Requires [2Fe-2S] cluster as cofactor. Mg(2+) is required as a cofactor.

It catalyses the reaction (2R)-2,3-dihydroxy-3-methylbutanoate = 3-methyl-2-oxobutanoate + H2O. The enzyme catalyses (2R,3R)-2,3-dihydroxy-3-methylpentanoate = (S)-3-methyl-2-oxopentanoate + H2O. It functions in the pathway amino-acid biosynthesis; L-isoleucine biosynthesis; L-isoleucine from 2-oxobutanoate: step 3/4. It participates in amino-acid biosynthesis; L-valine biosynthesis; L-valine from pyruvate: step 3/4. Its function is as follows. Functions in the biosynthesis of branched-chain amino acids. Catalyzes the dehydration of (2R,3R)-2,3-dihydroxy-3-methylpentanoate (2,3-dihydroxy-3-methylvalerate) into 2-oxo-3-methylpentanoate (2-oxo-3-methylvalerate) and of (2R)-2,3-dihydroxy-3-methylbutanoate (2,3-dihydroxyisovalerate) into 2-oxo-3-methylbutanoate (2-oxoisovalerate), the penultimate precursor to L-isoleucine and L-valine, respectively. This chain is Dihydroxy-acid dehydratase, found in Hyphomonas neptunium (strain ATCC 15444).